A 194-amino-acid polypeptide reads, in one-letter code: ATP-dependent Clp protease proteolytic subunit (194 aa).

Serine 98 serves as the catalytic Nucleophile. Histidine 123 is a catalytic residue.

It belongs to the peptidase S14 family. Fourteen ClpP subunits assemble into 2 heptameric rings which stack back to back to give a disk-like structure with a central cavity, resembling the structure of eukaryotic proteasomes.

It localises to the cytoplasm. The enzyme catalyses Hydrolysis of proteins to small peptides in the presence of ATP and magnesium. alpha-casein is the usual test substrate. In the absence of ATP, only oligopeptides shorter than five residues are hydrolyzed (such as succinyl-Leu-Tyr-|-NHMec, and Leu-Tyr-Leu-|-Tyr-Trp, in which cleavage of the -Tyr-|-Leu- and -Tyr-|-Trp bonds also occurs).. Its function is as follows. Cleaves peptides in various proteins in a process that requires ATP hydrolysis. Has a chymotrypsin-like activity. Plays a major role in the degradation of misfolded proteins. In Alkaliphilus metalliredigens (strain QYMF), this protein is ATP-dependent Clp protease proteolytic subunit.